The sequence spans 379 residues: Homoserine O-succinyltransferase (379 aa).

Residues 51–360 (NAVLICHALS…DAPQGHDAFL (310 aa)) enclose the AB hydrolase-1 domain. S157 functions as the Nucleophile in the catalytic mechanism. R227 contributes to the substrate binding site. Catalysis depends on residues D323 and H356. Residue D357 participates in substrate binding.

The protein belongs to the AB hydrolase superfamily. MetX family. As to quaternary structure, homodimer.

The protein resides in the cytoplasm. It catalyses the reaction L-homoserine + succinyl-CoA = O-succinyl-L-homoserine + CoA. It participates in amino-acid biosynthesis; L-methionine biosynthesis via de novo pathway; O-succinyl-L-homoserine from L-homoserine: step 1/1. Transfers a succinyl group from succinyl-CoA to L-homoserine, forming succinyl-L-homoserine. The sequence is that of Homoserine O-succinyltransferase from Pseudomonas aeruginosa (strain LESB58).